A 564-amino-acid chain; its full sequence is NAD-dependent malic enzyme (564 aa).

The Proton donor role is filled by Tyr102. Arg155 contributes to the NAD(+) binding site. The active-site Proton acceptor is Lys173. Residues Glu244, Asp245, and Asp268 each contribute to the a divalent metal cation site. Asp268 and Asn417 together coordinate NAD(+).

This sequence belongs to the malic enzymes family. Homotetramer. Mg(2+) serves as cofactor. Mn(2+) is required as a cofactor.

The catalysed reaction is (S)-malate + NAD(+) = pyruvate + CO2 + NADH. It carries out the reaction oxaloacetate + H(+) = pyruvate + CO2. The sequence is that of NAD-dependent malic enzyme from Pseudomonas aeruginosa (strain LESB58).